We begin with the raw amino-acid sequence, 341 residues long: Ketol-acid reductoisomerase (NADP(+)) (341 aa).

The KARI N-terminal Rossmann domain maps to 3–184 (LKVYYDKDCD…GGGRSGIIET (182 aa)). Residues 26–29 (FGSQ), S54, and 84–87 (DELQ) each bind NADP(+). H109 is an active-site residue. Position 135 (G135) interacts with NADP(+). Positions 185–330 (TFKDETETDL…GRLRAMMPWI (146 aa)) constitute a KARI C-terminal knotted domain. The Mg(2+) site is built by D193, E197, E229, and E233. S254 serves as a coordination point for substrate.

The protein belongs to the ketol-acid reductoisomerase family. Mg(2+) serves as cofactor.

The catalysed reaction is (2R)-2,3-dihydroxy-3-methylbutanoate + NADP(+) = (2S)-2-acetolactate + NADPH + H(+). It carries out the reaction (2R,3R)-2,3-dihydroxy-3-methylpentanoate + NADP(+) = (S)-2-ethyl-2-hydroxy-3-oxobutanoate + NADPH + H(+). Its pathway is amino-acid biosynthesis; L-isoleucine biosynthesis; L-isoleucine from 2-oxobutanoate: step 2/4. The protein operates within amino-acid biosynthesis; L-valine biosynthesis; L-valine from pyruvate: step 2/4. Involved in the biosynthesis of branched-chain amino acids (BCAA). Catalyzes an alkyl-migration followed by a ketol-acid reduction of (S)-2-acetolactate (S2AL) to yield (R)-2,3-dihydroxy-isovalerate. In the isomerase reaction, S2AL is rearranged via a Mg-dependent methyl migration to produce 3-hydroxy-3-methyl-2-ketobutyrate (HMKB). In the reductase reaction, this 2-ketoacid undergoes a metal-dependent reduction by NADPH to yield (R)-2,3-dihydroxy-isovalerate. In Helicobacter hepaticus (strain ATCC 51449 / 3B1), this protein is Ketol-acid reductoisomerase (NADP(+)).